The following is an 855-amino-acid chain: MESLSQHTPMMQQYWKLKREHPDQLMFYRMGDFYELFYEDAKKAAKLLDITLTARGQSAGKSIPMAGIPFHSVEGYLAKLVKLGESVAICEQIGDPATTKGPVERQVVRIITPGTVSDEALLDERRDNLLAAVVGDERLFGLAILDITSGRFNVQEIQGWENLLAELERLNPAELLYPDDWPAGLPLEKRRGAHRRAPWDFDFDSAYKSLCQQFATQDLKGFGCDGLGLAIGAAGCLLAYARETQRTALPHLRGLRHERLDDTVILDGASRRNLELDVNLSGGRDNTLQSVIDRCQTAMGSRLLGRWLNRPLRDRAVLEARQDTVACLLQDYRFESLQPQLKEIGDVERILARIGLRNARPRDLARLRDALAALPQLQTALSPLEAPHLQALAGNIRTYPELAELLRRAIIDNPPAVIRDGGVLKQGYDAELDELLSLSENAGQFLMDLEAREKARTGLPNLKVGYNRIHGYYIELPRVQAEQAPADYIRRQTLKGAERFITPELKAFEDKALSAKSRALAREKALYEELLEILIAQLAPLQETATALAELDVLANLAERALNLDFNRPRFVEEPCLRIRQGRHPVVEQVLDTPFVANDLELDDNTRMLIITGPNMGGKSTYMRQTALIVLLAHIGSFVPAQSCELSLVDRIFTRIGSSDDLAGGRSTFMVEMSETANILHNASERSLVLMDEVGRGTSTFDGLSLAWAAAEHLAGLRAWTLFATHYFELTVLAESQPVVANVHLSATEHNERIVFLHHVLPGPASQSYGLAVAQLAGVPGPVISRAREHLARLEATSLPHEAPLREAGKPQPPIQSDLFASLPHPLMEELARLKPDDLSPRQALELLYSWKTRL.

Residue Gly613 to Ser620 coordinates ATP.

This sequence belongs to the DNA mismatch repair MutS family.

Functionally, this protein is involved in the repair of mismatches in DNA. It is possible that it carries out the mismatch recognition step. This protein has a weak ATPase activity. This chain is DNA mismatch repair protein MutS, found in Azotobacter vinelandii (strain DJ / ATCC BAA-1303).